Here is a 303-residue protein sequence, read N- to C-terminus: Protoheme IX farnesyltransferase (303 aa).

9 consecutive transmembrane segments (helical) span residues 26-46, 48-68, 98-118, 120-140, 148-168, 174-194, 221-241, 244-264, and 278-298; these read VVALMLLTSLIGMLLAVPGMV, IDILILGNLGIALCAGSAAAV, AILFAAILGLAGMAILMVWVN, LTAWLTLASLVGYAFIYTFWL, IVIGGLAGAAPPLLGWVAVTG, ALLLVLIIFAWTPPHFWALAV, ILLYTFILIAVTLLPYATHML, LYLLGAVVLGIGFLYYAVAMM, and YSIVYLMALFVVMLLDHYLLP.

Belongs to the UbiA prenyltransferase family. Protoheme IX farnesyltransferase subfamily.

It localises to the cell inner membrane. It catalyses the reaction heme b + (2E,6E)-farnesyl diphosphate + H2O = Fe(II)-heme o + diphosphate. The protein operates within porphyrin-containing compound metabolism; heme O biosynthesis; heme O from protoheme: step 1/1. Converts heme B (protoheme IX) to heme O by substitution of the vinyl group on carbon 2 of heme B porphyrin ring with a hydroxyethyl farnesyl side group. This chain is Protoheme IX farnesyltransferase, found in Saccharophagus degradans (strain 2-40 / ATCC 43961 / DSM 17024).